The primary structure comprises 343 residues: MTLQKPFPDRPLTLAVLGSSGAVGAEILKILEERSFPIRELRLLASERSAGQVQFFKGEDLVVKKVSPEGFEDVDLVLASAGGSISRKWRKVINSAGAVIVDNSNAYRMEPDVPLVVPEVNPSQVFTHKGLIANPNCTTILLALVLAPLSAQLPIKRVVVSTYQSASGAGARAMNELKQLSQDVLNGNIPKSEILPYSLAFNLFLHNSPLQSNNYCEEEMKMINETRKILNQSELAITATCVRVPVLRAHSESINIEFAEPFPVEEARKILSNASGIKLLEDIQMNRFPMPIDVTGKDDIAVGRIRQDLSNPKALELWLCGDQIRKGAALNAIQIAELLLTRS.

NADP(+) contacts are provided by residues Ser-20–Val-23 and Arg-48–Ser-49. Arg-108 lines the phosphate pocket. The active-site Acyl-thioester intermediate is the Cys-137. Gln-164 provides a ligand contact to substrate. Ser-167–Gly-168 lines the NADP(+) pocket. Phosphate is bound at residue Lys-221. Arg-243 is a binding site for substrate. His-250 (proton acceptor) is an active-site residue. Gln-323 contributes to the NADP(+) binding site.

Belongs to the aspartate-semialdehyde dehydrogenase family. As to quaternary structure, homodimer.

It catalyses the reaction L-aspartate 4-semialdehyde + phosphate + NADP(+) = 4-phospho-L-aspartate + NADPH + H(+). It participates in amino-acid biosynthesis; L-lysine biosynthesis via DAP pathway; (S)-tetrahydrodipicolinate from L-aspartate: step 2/4. The protein operates within amino-acid biosynthesis; L-methionine biosynthesis via de novo pathway; L-homoserine from L-aspartate: step 2/3. It functions in the pathway amino-acid biosynthesis; L-threonine biosynthesis; L-threonine from L-aspartate: step 2/5. In terms of biological role, catalyzes the NADPH-dependent formation of L-aspartate-semialdehyde (L-ASA) by the reductive dephosphorylation of L-aspartyl-4-phosphate. The protein is Aspartate-semialdehyde dehydrogenase of Prochlorococcus marinus (strain SARG / CCMP1375 / SS120).